The chain runs to 195 residues: Putative EGF-like and EMI domain-containing protein 1 (195 aa).

One can recognise an EGF-like domain in the interval 86–97 (CTCKSGYQGNRC).

The sequence is that of Putative EGF-like and EMI domain-containing protein 1 (EGFEM1P) from Homo sapiens (Human).